A 120-amino-acid polypeptide reads, in one-letter code: Chaperonin GroEL (120 aa).

Aspartate 23–threonine 27 serves as a coordination point for ATP.

It belongs to the chaperonin (HSP60) family. Forms a cylinder of 14 subunits composed of two heptameric rings stacked back-to-back. Interacts with the co-chaperonin GroES.

It is found in the cytoplasm. The catalysed reaction is ATP + H2O + a folded polypeptide = ADP + phosphate + an unfolded polypeptide.. Functionally, together with its co-chaperonin GroES, plays an essential role in assisting protein folding. The GroEL-GroES system forms a nano-cage that allows encapsulation of the non-native substrate proteins and provides a physical environment optimized to promote and accelerate protein folding. In Mycobacterium intracellulare, this protein is Chaperonin GroEL.